Consider the following 560-residue polypeptide: uncharacterized protein (560 aa).

Residues 1–17 (MEPKRKSGSLAKHDLPQ) lie on the Cytoplasmic side of the membrane. The helical transmembrane segment at 18-38 (FYLLIMLYLAQGIPVGLAFGT) threads the bilayer. Topologically, residues 39–54 (VPFLLKSLAKETSFTS) are extracellular. Residues 55 to 75 (LGIFSMATYPYSLKIIWSPIV) form a helical membrane-spanning segment. At 76–88 (DSLYNKRIGRRRS) the chain is on the cytoplasmic side. Residues 89–109 (WIIPVQFVSGFVLWALGWCIS) form a helical membrane-spanning segment. Residues 110 to 139 (QGIIFDGVDDAFHNRGNGTLHSVSIKNLTW) lie on the Extracellular side of the membrane. The chain crosses the membrane as a helical span at residues 140 to 160 (WFGLLVFLCATQDIAVDGWAL). Over 161–172 (TILSKESLSYAS) the chain is Cytoplasmic. The helical transmembrane segment at 173-193 (TAQTIGLNIGYFMSFTIFLSL) threads the bilayer. Residues 194 to 214 (NSSDFANKYFRNIPLDHGFIS) lie on the Extracellular side of the membrane. The chain crosses the membrane as a helical span at residues 215–235 (LGGYMKFSGMLYIVITIYIIF). Topologically, residues 236 to 329 (CTKEKPYVEY…KLLEQGFKRE (94 aa)) are cytoplasmic. The helical transmembrane segment at 330–350 (DLAVTVLIDLPFEIIFGYYVV) threads the bilayer. The Extracellular portion of the chain corresponds to 351-374 (KWSSDKDPMIRDNRRLRNSTGTNK). A helical transmembrane segment spans residues 375–395 (VIKFLVGDAGVLTPWLWGFLG). Topologically, residues 396–421 (RLAAAVLGSYVVKQFPKDGEISTGYF) are cytoplasmic. Residues 422 to 442 (CLVIFQHLLGSFMNTVQFIGI) form a helical membrane-spanning segment. At 443–521 (SAFHTRVADP…LNGTVTILRD (79 aa)) the chain is on the extracellular side. A helical transmembrane segment spans residues 522-542 (GYYITNLICIVVGLFLYFGYL). At 543-560 (KRKILHLQSLPISSWRCT) the chain is on the cytoplasmic side.

The protein localises to the membrane. This is an uncharacterized protein from Saccharomyces cerevisiae (strain ATCC 204508 / S288c) (Baker's yeast).